Here is a 205-residue protein sequence, read N- to C-terminus: Small ribosomal subunit protein uS4 (205 aa).

Residues serine 94–isoleucine 157 enclose the S4 RNA-binding domain.

The protein belongs to the universal ribosomal protein uS4 family. In terms of assembly, part of the 30S ribosomal subunit. Contacts protein S5. The interaction surface between S4 and S5 is involved in control of translational fidelity.

Its function is as follows. One of the primary rRNA binding proteins, it binds directly to 16S rRNA where it nucleates assembly of the body of the 30S subunit. In terms of biological role, with S5 and S12 plays an important role in translational accuracy. This chain is Small ribosomal subunit protein uS4, found in Rickettsia prowazekii (strain Madrid E).